A 227-amino-acid polypeptide reads, in one-letter code: DNA repair protein RecO (227 aa).

Belongs to the RecO family.

Its function is as follows. Involved in DNA repair and RecF pathway recombination. This Pseudomonas putida (strain W619) protein is DNA repair protein RecO.